We begin with the raw amino-acid sequence, 144 residues long: Apidaecins type 22 (144 aa).

The first 19 residues, 1 to 19, serve as a signal peptide directing secretion; sequence MKNFALAILVVTFVVAVFG. 4 propeptides span residues 20–42, 63–70, 91–98, and 119–126; these read NTNL…EAEP and EAEPEAEP. The interval 20 to 144 is disordered; the sequence is NTNLDPPTRP…PQPRPPHPRI (125 aa). A compositionally biased stretch (pro residues) spans 134 to 144; sequence IPQPRPPHPRI.

Belongs to the apidaecin family.

It is found in the secreted. In terms of biological role, apidaecins have bactericidal activity; predominantly against Gram-negative bacteria. They seem to interfere with cell propagation. This chain is Apidaecins type 22, found in Apis mellifera (Honeybee).